Reading from the N-terminus, the 268-residue chain is Hydroxyethylthiazole kinase 2 (268 aa).

A substrate-binding site is contributed by Met42. Lys117 and Thr167 together coordinate ATP. Gly194 is a binding site for substrate.

This sequence belongs to the Thz kinase family. Mg(2+) serves as cofactor.

The enzyme catalyses 5-(2-hydroxyethyl)-4-methylthiazole + ATP = 4-methyl-5-(2-phosphooxyethyl)-thiazole + ADP + H(+). It participates in cofactor biosynthesis; thiamine diphosphate biosynthesis; 4-methyl-5-(2-phosphoethyl)-thiazole from 5-(2-hydroxyethyl)-4-methylthiazole: step 1/1. Functionally, catalyzes the phosphorylation of the hydroxyl group of 4-methyl-5-beta-hydroxyethylthiazole (THZ). The protein is Hydroxyethylthiazole kinase 2 of Streptococcus pneumoniae (strain CGSP14).